We begin with the raw amino-acid sequence, 462 residues long: L-seryl-tRNA(Sec) selenium transferase (462 aa).

K294 carries the N6-(pyridoxal phosphate)lysine modification.

Belongs to the SelA family. As to quaternary structure, homodecamer; pentamer of dimers. Binds only one seryl-tRNA(Sec) per dimer. It depends on pyridoxal 5'-phosphate as a cofactor.

It localises to the cytoplasm. The catalysed reaction is L-seryl-tRNA(Sec) + selenophosphate + H(+) = L-selenocysteinyl-tRNA(Sec) + phosphate. Its pathway is aminoacyl-tRNA biosynthesis; selenocysteinyl-tRNA(Sec) biosynthesis; selenocysteinyl-tRNA(Sec) from L-seryl-tRNA(Sec) (bacterial route): step 1/1. Its function is as follows. Converts seryl-tRNA(Sec) to selenocysteinyl-tRNA(Sec) required for selenoprotein biosynthesis. This is L-seryl-tRNA(Sec) selenium transferase from Yersinia enterocolitica serotype O:8 / biotype 1B (strain NCTC 13174 / 8081).